The sequence spans 279 residues: MGLSPGAEGEYALRLPRIPPPLPKPASRTASTGPKDQPPALRRSAVPHSGLNSISPLELEESVGFAALVQLPAKQPPPGTLEQGRSIQQGEKAVVSLETTPSQKADWSSIPKPENEGKLIKQAAEGKPRPRPGDLIEIFRIGYEHWAIYVEDDCVVHLAPPSEEFEVGSITSIFSNRAVVKYSRLEDVLHGCSWKVNNKLDGTYLPLPVDKIIQRTKKMVNKIVQYSLIEGNCEHFVNGLRYGVPRSQQVEHALMEGAKAAGAVISAVVDSIKPKPITA.

2 disordered regions span residues 1–53 and 70–117; these read MGLS…GLNS and QLPA…ENEG. Positions 97 to 106 are enriched in polar residues; it reads LETTPSQKAD. The LRAT domain maps to 135 to 249; that stretch reads LIEIFRIGYE…LRYGVPRSQQ (115 aa). Residues H145 and H157 contribute to the active site. C233 serves as the catalytic Acyl-thioester intermediate.

Belongs to the H-rev107 family. Highest expression level in testis and pancreas.

The protein resides in the cytoplasm. Its subcellular location is the cytosol. It carries out the reaction a 1,2-diacyl-sn-glycero-3-phosphocholine + H2O = a 1-acyl-sn-glycero-3-phosphocholine + a fatty acid + H(+). It catalyses the reaction a 1,2-diacyl-sn-glycero-3-phosphocholine + H2O = a 2-acyl-sn-glycero-3-phosphocholine + a fatty acid + H(+). The catalysed reaction is 1-hexadecanoyl-2-(5Z,8Z,11Z,14Z-eicosatetraenoyl)-sn-glycero-3-phosphocholine + 1,2-di-(9Z-octadecenoyl)-sn-glycero-3-phosphoethanolamine = N-(5Z,8Z,11Z,14Z-eicosatetraenoyl)-1,2-di-(9Z-octadecenoyl)-sn-glycero-3-phosphoethanolamine + 1-hexadecanoyl-sn-glycero-3-phosphocholine + H(+). The enzyme catalyses 1,2-di-(9Z-octadecenoyl)-sn-glycero-3-phosphoethanolamine + 1,2-dihexadecanoyl-sn-glycero-3-phosphocholine = N-hexadecanoyl-1,2-di-(9Z-octadecenoyl)-sn-glycero-3-phosphoethanolamine + 1-hexadecanoyl-sn-glycero-3-phosphocholine + H(+). It carries out the reaction 1,2-di-(9Z-octadecenoyl)-sn-glycero-3-phosphoethanolamine + 1,2-dihexadecanoyl-sn-glycero-3-phosphocholine = N-hexadecanoyl-1,2-di-(9Z-octadecenoyl)-sn-glycero-3-phosphoethanolamine + 2-hexadecanoyl-sn-glycero-3-phosphocholine + H(+). It catalyses the reaction a 1,2-diacyl-sn-glycero-3-phosphoethanolamine + a 1,2-diacyl-sn-glycero-3-phosphocholine = an N-acyl-1,2-diacyl-sn-glycero-3-phosphoethanolamine + a 1-acyl-sn-glycero-3-phosphocholine + H(+). The catalysed reaction is a 1,2-diacyl-sn-glycero-3-phosphoethanolamine + a 1,2-diacyl-sn-glycero-3-phosphocholine = an N-acyl-1,2-diacyl-sn-glycero-3-phosphoethanolamine + a 2-acyl-sn-glycero-3-phosphocholine + H(+). The enzyme catalyses 1-hexadecanoyl-2-(9Z-octadecenoyl)-sn-glycero-3-phosphocholine + 1,2-di-(9Z-octadecenoyl)-sn-glycero-3-phosphoethanolamine = N,1,2-tri-(9Z-octadecenoyl)-sn-glycero-3-phosphoethanolamine + 1-hexadecanoyl-sn-glycero-3-phosphocholine + H(+). In terms of biological role, exhibits both phospholipase A1/2 and acyltransferase activities. Shows phospholipase A1 (PLA1) and A2 (PLA2) activity, catalyzing the calcium-independent release of fatty acids from the sn-1 or sn-2 position of glycerophospholipids. Shows N-acyltransferase activity, catalyzing the calcium-independent transfer of a fatty acyl group at the sn-1 position of phosphatidylcholine (PC) and other glycerophospholipids to the primary amine of phosphatidylethanolamine (PE), forming N-acylphosphatidylethanolamine (NAPE), which serves as precursor for N-acylethanolamines (NAEs). The protein is Phospholipase A and acyltransferase 5 of Homo sapiens (Human).